The following is a 127-amino-acid chain: Fluoride-specific ion channel FluC (127 aa).

The next 4 helical transmembrane spans lie at 7–27 (LFLI…LTLL), 37–57 (FGTL…LAMF), 70–90 (FFVT…AEVI), and 102–122 (ITIT…GVFI). Positions 77 and 80 each coordinate Na(+).

Belongs to the fluoride channel Fluc/FEX (TC 1.A.43) family.

It is found in the cell inner membrane. The enzyme catalyses fluoride(in) = fluoride(out). With respect to regulation, na(+) is not transported, but it plays an essential structural role and its presence is essential for fluoride channel function. In terms of biological role, fluoride-specific ion channel. Important for reducing fluoride concentration in the cell, thus reducing its toxicity. This chain is Fluoride-specific ion channel FluC, found in Histophilus somni (strain 129Pt) (Haemophilus somnus).